We begin with the raw amino-acid sequence, 391 residues long: Erythronate-4-phosphate dehydrogenase (391 aa).

Substrate-binding residues include Ser45 and Thr67. NAD(+) contacts are provided by Asp147 and Thr176. Arg209 is a catalytic residue. Asp238 contributes to the NAD(+) binding site. The active site involves Glu243. Catalysis depends on His260, which acts as the Proton donor. Residue Gly263 participates in NAD(+) binding. Tyr264 contacts substrate.

The protein belongs to the D-isomer specific 2-hydroxyacid dehydrogenase family. PdxB subfamily. As to quaternary structure, homodimer.

Its subcellular location is the cytoplasm. It catalyses the reaction 4-phospho-D-erythronate + NAD(+) = (R)-3-hydroxy-2-oxo-4-phosphooxybutanoate + NADH + H(+). Its pathway is cofactor biosynthesis; pyridoxine 5'-phosphate biosynthesis; pyridoxine 5'-phosphate from D-erythrose 4-phosphate: step 2/5. Its function is as follows. Catalyzes the oxidation of erythronate-4-phosphate to 3-hydroxy-2-oxo-4-phosphonooxybutanoate. In Photobacterium profundum (strain SS9), this protein is Erythronate-4-phosphate dehydrogenase.